Reading from the N-terminus, the 399-residue chain is S-adenosylmethionine synthase (399 aa).

His-17 provides a ligand contact to ATP. Asp-19 lines the Mg(2+) pocket. K(+) is bound at residue Glu-45. L-methionine contacts are provided by Glu-58 and Gln-101. The tract at residues 101-111 (QSPDIAQGVDK) is flexible loop. ATP is bound by residues 176–178 (DGK), 243–244 (RF), Asp-252, 258–259 (RK), and Lys-279. Asp-252 serves as a coordination point for L-methionine. Residue Lys-283 coordinates L-methionine.

The protein belongs to the AdoMet synthase family. As to quaternary structure, homotetramer; dimer of dimers. Requires Mg(2+) as cofactor. K(+) is required as a cofactor.

The protein resides in the cytoplasm. It carries out the reaction L-methionine + ATP + H2O = S-adenosyl-L-methionine + phosphate + diphosphate. It functions in the pathway amino-acid biosynthesis; S-adenosyl-L-methionine biosynthesis; S-adenosyl-L-methionine from L-methionine: step 1/1. Its function is as follows. Catalyzes the formation of S-adenosylmethionine (AdoMet) from methionine and ATP. The overall synthetic reaction is composed of two sequential steps, AdoMet formation and the subsequent tripolyphosphate hydrolysis which occurs prior to release of AdoMet from the enzyme. The sequence is that of S-adenosylmethionine synthase from Staphylococcus epidermidis (strain ATCC 35984 / DSM 28319 / BCRC 17069 / CCUG 31568 / BM 3577 / RP62A).